A 161-amino-acid chain; its full sequence is Nucleotide-binding protein XAC3671 (161 aa).

Belongs to the YajQ family.

Nucleotide-binding protein. In Xanthomonas axonopodis pv. citri (strain 306), this protein is Nucleotide-binding protein XAC3671.